The primary structure comprises 579 residues: Membrane frizzled-related protein (579 aa).

Residues 1-69 (MKDFSDVILC…RPDCRFSWLC (69 aa)) are Cytoplasmic-facing. The chain crosses the membrane as a helical; Signal-anchor for type II membrane protein span at residues 70-90 (VLLLSSLLLLLLGLLVAIILA). Residues 91-579 (QLQAAPPSGA…AADLEACAQP (489 aa)) lie on the Extracellular side of the membrane. Positions 100–143 (ASHSPLPAGGLTTTTTTPTITTSQAAGTPKGQQESGVSPSPQST) are disordered. Over residues 111–121 (TTTTTTPTITT) the composition is skewed to low complexity. Polar residues predominate over residues 122–143 (SQAAGTPKGQQESGVSPSPQST). 2 disulfides stabilise this stretch: Cys-144/Cys-170 and Cys-197/Cys-216. One can recognise a CUB 1 domain in the interval 144–253 (CGGLLSGPRG…FGFHAWYQAM (110 aa)). Asn-227 is a glycosylation site (N-linked (GlcNAc...) asparagine). Positions 259 to 295 (SCAHDEFRCDQLICLLPDSVCDGFANCADGSDETNCS) constitute an LDL-receptor class A 1 domain. Cystine bridges form between Cys-260-Cys-272, Cys-267-Cys-285, Cys-279-Cys-294, Cys-301-Cys-327, and Cys-354-Cys-377. Positions 301–414 (CGGNLTGLQG…GGFSATYLAF (114 aa)) constitute a CUB 2 domain. The N-linked (GlcNAc...) asparagine glycan is linked to Asn-415. Residues 420-455 (PCGPSELSCQAGGCKGVQWMCDMWRDCTDGSDDNCS) enclose the LDL-receptor class A 2 domain. Disulfide bonds link Cys-421–Cys-433, Cys-428–Cys-446, Cys-440–Cys-454, Cys-466–Cys-528, Cys-474–Cys-521, Cys-512–Cys-549, Cys-538–Cys-576, and Cys-542–Cys-564. In terms of domain architecture, FZ spans 461–579 (PPELACEPVQ…AADLEACAQP (119 aa)).

In terms of assembly, interacts with C1QTNF5. Specifically expressed in brain. Strongly expressed in medulla oblongata and to a lower extent in hippocampus and corpus callosum. Expressed in keratinocytes.

It localises to the apical cell membrane. May play a role in eye development. The chain is Membrane frizzled-related protein (MFRP) from Homo sapiens (Human).